The sequence spans 952 residues: MPGKIENGTPKDLKTGNDFVSAAKSLLDRAFKSHHSYYGLCSTSCQVYDTAWVAMIPKTRDNVKQWLFPECFHYLLKTQAADGSWGSLPTTQTAGILDTASAVLALLCHAQEPLQILDVSPDEMGLRIEHGVTSLKRQLAVWNDVEDTNHIGVEFIIPALLSMLEKELDVPSFEFPCRSILERMHGEKLGHFDLEQVYGKPSSLLHSLEAFLGKLDFDRLSHHLYHGSMMASPSSTAAYLIGATKWDDEAEDYLRHVMRNGAGHGNGGISGTFPTTHFECSWIIATLLKVGFTLKQIDGDGLRGLSTILLEALRDENGVIGFAPRTADVDDTAKALLALSLVNQPVSPDIMIKVFEGKDHFTTFGSERDPSLTSNLHVLLSLLKQSNLSQYHPQILKTTLFTCRWWWGSDHCVKDKWNLSHLYPTMLLVEAFTEVLHLIDGGELSSLFDESFKCKIGLSIFQAVLRIILTQDNDGSWRGYREQTCYAILALVQARHVCFFTHMVDRLQSCVDRGFSWLKSCSFHSQDLTWTSKTAYEVGFVAEAYKLAALQSASLEVPAATIGHSVTSAVPSSDLEKYMRLVRKTALFSPLDEWGLMASIIESSFFVPLLQAQRVEIYPRDNIKVDEDKYLSIIPFTWVGCNNRSRTFASNRWLYDMMYLSLLGYQTDEYMEAVAGPVFGDVSLLHQTIDKVIDNTMGNLARANGTVHSGNGHQHESPNIGQVEDTLTRFTNSVLNHKDVLNSSSSDQDTLRREFRTFMHAHITQIEDNSRFSKQASSDAFSSPEQSYFQWVNSTGGSHVACAYSFAFSNCLMSANLLQGKDAFPSGTQKYLISSVMRHATNMCRMYNDFGSIARDNAERNVNSIHFPEFTLCNGTSQNLDERKERLLKIATYEQGYLDRALEALERQSRDDAGDRAGSKDMRKLKIVKLFCDVTDLYDQLYVIKDLSSSMK.

Asp-668, Glu-672, Asn-848, Asp-849, Ser-852, and Asp-856 together coordinate Mg(2+). Positions 668–672 match the DEXXE motif motif; that stretch reads DEYME.

It belongs to the terpene synthase family. Requires Mg(2+) as cofactor.

The enzyme catalyses ent-copalyl diphosphate = ent-kaur-16-ene + diphosphate. The catalysed reaction is (2E,6E,10E)-geranylgeranyl diphosphate = ent-copalyl diphosphate. The protein operates within plant hormone biosynthesis; gibberellin biosynthesis. Functionally, catalyzes the conversion of geranylgeranyl diphosphate to the gibberellin precursor ent-kaurene diphosphate in a two step process. This is Ent-kaur-16-ene synthase (cps) from Fusarium fujikuroi (Bakanae and foot rot disease fungus).